A 459-amino-acid polypeptide reads, in one-letter code: Probable PTS system sucrose-specific EIIBC component (459 aa).

The region spanning 1 to 86 (MHKEIAKELL…VHVWETAPSE (86 aa)) is the PTS EIIB type-1 domain. Cysteine 25 serves as the catalytic Phosphocysteine intermediate; for EIIB activity. The 354-residue stretch at 106-459 (KTLSDIFVPI…LFLGFKEETE (354 aa)) folds into the PTS EIIC type-1 domain. 11 helical membrane-spanning segments follow: residues 111–131 (IFVP…LIGM), 147–167 (MLDL…GFSA), 177–197 (LGAV…SMLG), 209–229 (LHIP…SVFV), 245–265 (LDVV…ALIV), 288–308 (AGIA…LSGL), 329–349 (FLVP…LAVF), 360–380 (IALP…VFGV), 388–408 (FIGA…VQVV), 412–432 (YGLT…ANFV), and 434–454 (YMIG…FLGF).

It is found in the cell membrane. Functionally, the phosphoenolpyruvate-dependent sugar phosphotransferase system (sugar PTS), a major carbohydrate active -transport system, catalyzes the phosphorylation of incoming sugar substrates concomitantly with their translocation across the cell membrane. This system may be involved in sucrose transport. The EIIB domain is mainly phosphorylated by the EIIA domains of GamP and PtsA/YpqE. Its function is as follows. Negatively regulates SacY activity by catalyzing its phosphorylation on 'His-99'. In Bacillus subtilis (strain 168), this protein is Probable PTS system sucrose-specific EIIBC component (sacX).